Consider the following 285-residue polypeptide: MKVDLGPDPSLVYRPDVDPEMAKSKGSFRNYTSGPLLDRVFTTYKLMHTHQTVDFVMRKRIQFGSFSYKKMTVMEAVDMLDDLVDESDPDVDFPNSFHAFQTAEGIRKAHPDKDWFHLVGLLHDLGKILALWGEPQWAVVGDTFPVGCRPQASVVFCDSTFQDNPDLQDPRYSTELGMYQPHCGLENVLMSWGHDEYLYQMMKFNKFSLPSEAFYMVRFHSFYPWHTGGDYRQLCSQQDLDMLPWVQEFNKFDLYTKCPDLPEVKSLRPYYQGLIDKYCPGILSW.

Position 29 (arginine 29) interacts with substrate. Serine 33 is modified (phosphoserine). Residue 85-87 (DES) participates in substrate binding. The Fe cation site is built by histidine 98, histidine 123, and aspartate 124. Substrate is bound by residues lysine 127 and 141–142 (GD). Residues histidine 194, histidine 220, and aspartate 253 each coordinate Fe cation. Residue 220-221 (HS) coordinates substrate.

Belongs to the myo-inositol oxygenase family. Requires Fe cation as cofactor. Kidney specific.

It is found in the cytoplasm. The catalysed reaction is myo-inositol + O2 = D-glucuronate + H2O + H(+). It functions in the pathway polyol metabolism; myo-inositol degradation into D-glucuronate; D-glucuronate from myo-inositol: step 1/1. The sequence is that of Inositol oxygenase (Miox) from Rattus norvegicus (Rat).